Consider the following 177-residue polypeptide: dCTP deaminase (177 aa).

Residues 100–105 and Asp116 contribute to the dCTP site; that span reads RSSIAR. The active-site Proton donor/acceptor is Glu126. The dCTP site is built by Tyr159 and Gln166.

It belongs to the dCTP deaminase family. In terms of assembly, homotrimer.

It carries out the reaction dCTP + H2O + H(+) = dUTP + NH4(+). It participates in pyrimidine metabolism; dUMP biosynthesis; dUMP from dCTP (dUTP route): step 1/2. Its function is as follows. Catalyzes the deamination of dCTP to dUTP. This chain is dCTP deaminase, found in Korarchaeum cryptofilum (strain OPF8).